A 70-amino-acid polypeptide reads, in one-letter code: Large ribosomal subunit protein uL29 (70 aa).

This sequence belongs to the universal ribosomal protein uL29 family.

The chain is Large ribosomal subunit protein uL29 from Prochlorococcus marinus (strain MIT 9313).